A 430-amino-acid polypeptide reads, in one-letter code: Serine--tRNA ligase (430 aa).

A disordered region spans residues 44 to 65; the sequence is TESLQAERNSRSKSIGAAKARG. 237 to 239 contributes to the L-serine binding site; it reads TAE. Position 268–270 (268–270) interacts with ATP; it reads RSE. Glutamate 291 contacts L-serine. 355–358 serves as a coordination point for ATP; sequence EISS. An L-serine-binding site is contributed by serine 391.

Belongs to the class-II aminoacyl-tRNA synthetase family. Type-1 seryl-tRNA synthetase subfamily. Homodimer. The tRNA molecule binds across the dimer.

The protein localises to the cytoplasm. It carries out the reaction tRNA(Ser) + L-serine + ATP = L-seryl-tRNA(Ser) + AMP + diphosphate + H(+). The catalysed reaction is tRNA(Sec) + L-serine + ATP = L-seryl-tRNA(Sec) + AMP + diphosphate + H(+). The protein operates within aminoacyl-tRNA biosynthesis; selenocysteinyl-tRNA(Sec) biosynthesis; L-seryl-tRNA(Sec) from L-serine and tRNA(Sec): step 1/1. In terms of biological role, catalyzes the attachment of serine to tRNA(Ser). Is also able to aminoacylate tRNA(Sec) with serine, to form the misacylated tRNA L-seryl-tRNA(Sec), which will be further converted into selenocysteinyl-tRNA(Sec). In Edwardsiella ictaluri (strain 93-146), this protein is Serine--tRNA ligase.